The following is a 65-amino-acid chain: Large ribosomal subunit protein uL29 (65 aa).

This sequence belongs to the universal ribosomal protein uL29 family.

This chain is Large ribosomal subunit protein uL29, found in Buchnera aphidicola subsp. Baizongia pistaciae (strain Bp).